A 203-amino-acid polypeptide reads, in one-letter code: Imidazoleglycerol-phosphate dehydratase (203 aa).

This sequence belongs to the imidazoleglycerol-phosphate dehydratase family.

Its subcellular location is the cytoplasm. The catalysed reaction is D-erythro-1-(imidazol-4-yl)glycerol 3-phosphate = 3-(imidazol-4-yl)-2-oxopropyl phosphate + H2O. It functions in the pathway amino-acid biosynthesis; L-histidine biosynthesis; L-histidine from 5-phospho-alpha-D-ribose 1-diphosphate: step 6/9. The polypeptide is Imidazoleglycerol-phosphate dehydratase (Deinococcus geothermalis (strain DSM 11300 / CIP 105573 / AG-3a)).